The sequence spans 62 residues: Large ribosomal subunit protein bL28 (62 aa).

Residues 1–27 are disordered; it reads MARECYITGRKARSGNKRSHAMNKSKR. Basic residues predominate over residues 10 to 27; the sequence is RKARSGNKRSHAMNKSKR.

It belongs to the bacterial ribosomal protein bL28 family.

The protein is Large ribosomal subunit protein bL28 of Shouchella clausii (strain KSM-K16) (Alkalihalobacillus clausii).